The sequence spans 687 residues: Polyphosphate kinase (687 aa).

Asn45 is a binding site for ATP. The Mg(2+) site is built by Arg375 and Arg405. Catalysis depends on His435, which acts as the Phosphohistidine intermediate. 3 residues coordinate ATP: Tyr472, Arg568, and His596.

It belongs to the polyphosphate kinase 1 (PPK1) family. Mg(2+) serves as cofactor. Post-translationally, an intermediate of this reaction is the autophosphorylated ppk in which a phosphate is covalently linked to a histidine residue through a N-P bond.

The catalysed reaction is [phosphate](n) + ATP = [phosphate](n+1) + ADP. Catalyzes the reversible transfer of the terminal phosphate of ATP to form a long-chain polyphosphate (polyP). The sequence is that of Polyphosphate kinase from Burkholderia ambifaria (strain ATCC BAA-244 / DSM 16087 / CCUG 44356 / LMG 19182 / AMMD) (Burkholderia cepacia (strain AMMD)).